A 451-amino-acid polypeptide reads, in one-letter code: Phosphoglucosamine mutase (451 aa).

The active-site Phosphoserine intermediate is Ser101. Mg(2+) contacts are provided by Ser101, Asp240, Asp242, and Asp244. Ser101 bears the Phosphoserine mark.

The protein belongs to the phosphohexose mutase family. It depends on Mg(2+) as a cofactor. In terms of processing, activated by phosphorylation.

The catalysed reaction is alpha-D-glucosamine 1-phosphate = D-glucosamine 6-phosphate. In terms of biological role, catalyzes the conversion of glucosamine-6-phosphate to glucosamine-1-phosphate. This chain is Phosphoglucosamine mutase, found in Thioalkalivibrio sulfidiphilus (strain HL-EbGR7).